The chain runs to 32 residues: Chlorophyll a-b binding protein 2, chloroplastic (32 aa).

Glutamate 19 and histidine 22 together coordinate chlorophyll a. Arginine 24 is a binding site for chlorophyll b.

Belongs to the light-harvesting chlorophyll a/b-binding (LHC) protein family. As to quaternary structure, the LHC complex consists of chlorophyll a-b binding proteins. Binds at least 14 chlorophylls (8 Chl-a and 6 Chl-b) and carotenoids such as lutein and neoxanthin. serves as cofactor. Photoregulated by reversible phosphorylation of its threonine residues.

The protein localises to the plastid. It localises to the chloroplast thylakoid membrane. Functionally, the light-harvesting complex (LHC) functions as a light receptor, it captures and delivers excitation energy to photosystems with which it is closely associated. This is Chlorophyll a-b binding protein 2, chloroplastic from Populus euphratica (Euphrates poplar).